A 197-amino-acid chain; its full sequence is Putative phosphopantothenoylcysteine decarboxylase (197 aa).

Residues Phe52 and 102–105 each bind FMN; that span reads SANT. Asn139 is a substrate binding site. The active-site Proton donor is the Cys174.

Belongs to the HFCD (homooligomeric flavin containing Cys decarboxylase) superfamily. In terms of assembly, homotrimer. Requires FMN as cofactor.

It carries out the reaction N-[(R)-4-phosphopantothenoyl]-L-cysteine + H(+) = (R)-4'-phosphopantetheine + CO2. The protein operates within cofactor biosynthesis; coenzyme A biosynthesis; CoA from (R)-pantothenate: step 3/5. Necessary for the biosynthesis of coenzyme A. Catalyzes the decarboxylation of 4-phosphopantothenoylcysteine to form 4'-phosphopantotheine. This Dictyostelium discoideum (Social amoeba) protein is Putative phosphopantothenoylcysteine decarboxylase (ppcdc).